We begin with the raw amino-acid sequence, 690 residues long: Elongation factor G (690 aa).

The tr-type G domain occupies E8 to L283. GTP contacts are provided by residues A17–T24, D81–H85, and N135–D138.

It belongs to the TRAFAC class translation factor GTPase superfamily. Classic translation factor GTPase family. EF-G/EF-2 subfamily.

It localises to the cytoplasm. Its function is as follows. Catalyzes the GTP-dependent ribosomal translocation step during translation elongation. During this step, the ribosome changes from the pre-translocational (PRE) to the post-translocational (POST) state as the newly formed A-site-bound peptidyl-tRNA and P-site-bound deacylated tRNA move to the P and E sites, respectively. Catalyzes the coordinated movement of the two tRNA molecules, the mRNA and conformational changes in the ribosome. The polypeptide is Elongation factor G (Nitrobacter hamburgensis (strain DSM 10229 / NCIMB 13809 / X14)).